Consider the following 968-residue polypeptide: Leucine--tRNA ligase (968 aa).

The segment covering 1–13 (MTETPTGTQSSRE) has biased composition (polar residues). The segment at 1 to 22 (MTETPTGTQSSRETAADDTPRH) is disordered. The short motif at 75-86 (PYPSGEGLHVGH) is the 'HIGH' region element. The short motif at 741–745 (KIGKS) is the 'KMSKS' region element. Lys744 serves as a coordination point for ATP.

This sequence belongs to the class-I aminoacyl-tRNA synthetase family.

Its subcellular location is the cytoplasm. It catalyses the reaction tRNA(Leu) + L-leucine + ATP = L-leucyl-tRNA(Leu) + AMP + diphosphate. This is Leucine--tRNA ligase from Mycolicibacterium vanbaalenii (strain DSM 7251 / JCM 13017 / BCRC 16820 / KCTC 9966 / NRRL B-24157 / PYR-1) (Mycobacterium vanbaalenii).